A 69-amino-acid polypeptide reads, in one-letter code: Putative membrane protein insertion efficiency factor (69 aa).

The protein belongs to the UPF0161 family.

It localises to the cell inner membrane. Its function is as follows. Could be involved in insertion of integral membrane proteins into the membrane. In Geobacter sulfurreducens (strain ATCC 51573 / DSM 12127 / PCA), this protein is Putative membrane protein insertion efficiency factor.